Consider the following 103-residue polypeptide: Auxin-responsive protein SAUR50 (103 aa).

The protein belongs to the ARG7 family.

In terms of biological role, effector of hormonal and environmental signals in plant growth. Involved in heliotropism. This Helianthus annuus (Common sunflower) protein is Auxin-responsive protein SAUR50.